The following is a 277-amino-acid chain: Short chain dehydrogenase penD (277 aa).

Ile28, Asp76, and Asn105 together coordinate NADP(+). Active-site proton donor residues include Ser158 and Ser159. Positions 173, 177, and 209 each coordinate NADP(+). Tyr173 (proton acceptor) is an active-site residue. Lys177 functions as the Lowers pKa of active site Tyr in the catalytic mechanism.

This sequence belongs to the short-chain dehydrogenases/reductases (SDR) family.

It carries out the reaction yaequinolone D + NADPH + H(+) = penigequinolone A + NADP(+) + H2O. The enzyme catalyses yaequinolone D + NADPH + H(+) = penigequinolone B + NADP(+) + H2O. It participates in secondary metabolite biosynthesis. Its pathway is alkaloid biosynthesis. The protein operates within mycotoxin biosynthesis. In terms of biological role, short chain dehydrogenase; part of the gene cluster that mediates the biosynthesis of penigequinolones, potent insecticidal alkaloids that contain a highly modified 10-carbon prenyl group. The first stage is catalyzed by the nonribosomal peptide synthetase penN that condenses anthranilic acid and O-methyl-L-tyrosine to produce 4'-methoxycyclopeptin. 4'-methoxycyclopeptin is then converted to 4'-methoxydehydrocyclopeptin by the ketoglutarate-dependent dioxygenase penM through dehydrogenation to form a double bond between C-alpha and C-beta of the O-methyltyrosine side chain. PenM also converts its first product methoxydehydrocyclopeptin to 4'-methoxycyclopenin. The following conversion of 4'methoxycyclopenin into 4'-methoxyviridicatin is catalyzed by the cyclopenase penL. 4'-methoxyviridicatin is the precursor of quinolone natural products, and is further converted to quinolinone B. The prenyltransferase penI then catalyzes the canonical Friedel-Crafts alkylation of quinolinone B with dimethylallyl cation to yield dimethylallyl quinolone, which is subjected to FAD-dependent dehydrogenation by the FAD-linked oxidoreductase penH to yield conjugated aryl diene. The delta(3') double bond then serves as the site of the second alkylation with DMAPP catalyzed by the prenyltransferase penG to yield a carbenium ion intermediate, which can be attacked by H(2)O to yield a styrenyl quinolone containing a C3'-hydroxyprenyl chain, or undergo cyclization to yield yaequinolones J1 and J2. The conversion of the styrenyl quinolone into the tetrahydrofuran-containing yaequinolone C is performed by the FAD-dependent monooxygenase penE and involves epoxidation of the terminal C7'-C8' olefin, followed by epoxide ring opening initiated by the C3' hydroxyl group. The predicted cysteine hydrolase penJ acts as an epoxide hydrolase that enhances the rate of the 5-exo-tet cyclization step, increasing the yield of yaequinolone C. PenF catalyzes the cationic rearrangement of the epoxide formed by penE (before ring opening to produce yaequinolone C) into yaequinolone D. Finally, the short-chain dehydrogenase/reductase (SDR)-like reductase penD, catalyzes both the dehydration of yaequinolone D and the reduction of the resulting oxonium to yield penigequinolone. The protein is Short chain dehydrogenase penD of Penicillium thymicola.